A 534-amino-acid polypeptide reads, in one-letter code: MLQRWLYSTNAKDIAVLYFIFSVFCGMAGTGMSMIIRLELAGPGNQYLGGNHQLFNTLVTGHAILMVFFLVMPALIGGFGNYLLPLMIGASDMSYPRLNNISFWLLPPALVCLVTSTLVESGAGTGWTVYAPLSGIQSHSGPSVDLAIFALHMTSISSLLGAINFIVTTLNMRTNGMSMHKMPLFVWAIFITAFLLLLSLPVLSAGVTLLLMDRNFNTSFYEVAGGGDPVLYQHLFWFFGHPEVYIMIVPAFGVISHIVSTYSKKPVFGEISMVYAMASIGLLGFLVWSHHMYVVGLDCDTRAYFTSATMIIAIPTGIKIFSWLATIYGGSIRLAVPMMYAIAFLFLFTLGGFTGVALANASLDVAFHDTYYVVAHFHYVLSMGAVFSMFAGYYYWSPHILGLNYNEKLAQIQFWLIFVGVNVIFLPMHFLGINGMPRRIPDYPDAFAGWNYVSSIGSFIAMISLILFIYILFDQLYNGLENKINNKSVTFMKAPDFVESNNKFNLNTIKTSSIEFLLNSPPAVHSFNTPAVTN.

The chain crosses the membrane as a helical span at residues 16–36 (VLYFIFSVFCGMAGTGMSMII). Residues E39 and G44 each contribute to the Ca(2+) site. H62 provides a ligand contact to Fe(II)-heme a. 6 helical membrane passes run 64–84 (ILMVFFLVMPALIGGFGNYLL), 101–121 (ISFWLLPPALVCLVTSTLVES), 147–167 (AIFALHMTSISSLLGAINFIV), 183–203 (PLFVWAIFITAFLLLLSLPVL), 235–255 (LFWFFGHPEVYIMIVPAFGVI), and 267–287 (VFGEISMVYAMASIGLLGFLV). A Cu cation-binding site is contributed by H241. The 1'-histidyl-3'-tyrosine (His-Tyr) cross-link spans 241–245 (HPEVY). Y245 provides a ligand contact to O2. H290 and H291 together coordinate Cu cation. The next 2 membrane-spanning stretches (helical) occupy residues 310 to 330 (MIIAIPTGIKIFSWLATIYGG) and 338 to 358 (MMYAIAFLFLFTLGGFTGVAL). Positions 368 and 369 each coordinate Mg(2+). Helical transmembrane passes span 372–392 (YVVAHFHYVLSMGAVFSMFAG) and 414–434 (FWLIFVGVNVIFLPMHFLGIN). A heme a3-binding site is contributed by H376. Fe(II)-heme a is bound at residue H378. Residue P441 coordinates Ca(2+). A helical transmembrane segment spans residues 453 to 473 (VSSIGSFIAMISLILFIYILF).

This sequence belongs to the heme-copper respiratory oxidase family. Component of the cytochrome c oxidase (complex IV, CIV), a multisubunit enzyme composed of a catalytic core of 3 subunits and several supernumerary subunits. The complex exists as a monomer or a dimer and forms supercomplexes (SCs) in the inner mitochondrial membrane with ubiquinol-cytochrome c oxidoreductase (cytochrome b-c1 complex, complex III, CIII). Heme serves as cofactor. Cu cation is required as a cofactor.

The protein localises to the mitochondrion inner membrane. It catalyses the reaction 4 Fe(II)-[cytochrome c] + O2 + 8 H(+)(in) = 4 Fe(III)-[cytochrome c] + 2 H2O + 4 H(+)(out). Its pathway is energy metabolism; oxidative phosphorylation. Functionally, component of the cytochrome c oxidase, the last enzyme in the mitochondrial electron transport chain which drives oxidative phosphorylation. The respiratory chain contains 3 multisubunit complexes succinate dehydrogenase (complex II, CII), ubiquinol-cytochrome c oxidoreductase (cytochrome b-c1 complex, complex III, CIII) and cytochrome c oxidase (complex IV, CIV), that cooperate to transfer electrons derived from NADH and succinate to molecular oxygen, creating an electrochemical gradient over the inner membrane that drives transmembrane transport and the ATP synthase. Cytochrome c oxidase is the component of the respiratory chain that catalyzes the reduction of oxygen to water. Electrons originating from reduced cytochrome c in the intermembrane space (IMS) are transferred via the dinuclear copper A center (CU(A)) of subunit 2 and heme A of subunit 1 to the active site in subunit 1, a binuclear center (BNC) formed by heme A3 and copper B (CU(B)). The BNC reduces molecular oxygen to 2 water molecules using 4 electrons from cytochrome c in the IMS and 4 protons from the mitochondrial matrix. This is Cytochrome c oxidase subunit 1 (COX1) from Vanderwaltozyma polyspora (strain ATCC 22028 / DSM 70294 / BCRC 21397 / CBS 2163 / NBRC 10782 / NRRL Y-8283 / UCD 57-17) (Kluyveromyces polysporus).